We begin with the raw amino-acid sequence, 156 residues long: NADH-ubiquinone oxidoreductase 20 kDa subunit (156 aa).

Cys-33, Cys-34, Cys-98, and Cys-128 together coordinate [4Fe-4S] cluster.

Belongs to the complex I 20 kDa subunit family. [4Fe-4S] cluster is required as a cofactor.

It localises to the mitochondrion. The enzyme catalyses a ubiquinone + NADH + 5 H(+)(in) = a ubiquinol + NAD(+) + 4 H(+)(out). The chain is NADH-ubiquinone oxidoreductase 20 kDa subunit (NAD10) from Paramecium tetraurelia.